The following is a 135-amino-acid chain: Large ribosomal subunit protein uL16c (135 aa).

The protein belongs to the universal ribosomal protein uL16 family. In terms of assembly, part of the 50S ribosomal subunit.

Its subcellular location is the plastid. It is found in the chloroplast. The chain is Large ribosomal subunit protein uL16c from Ceratophyllum demersum (Rigid hornwort).